The chain runs to 256 residues: Ribosomal RNA small subunit methyltransferase A (256 aa).

The S-adenosyl-L-methionine site is built by N12, L14, G39, E60, D85, and N103.

It belongs to the class I-like SAM-binding methyltransferase superfamily. rRNA adenine N(6)-methyltransferase family. RsmA subfamily.

It localises to the cytoplasm. The enzyme catalyses adenosine(1518)/adenosine(1519) in 16S rRNA + 4 S-adenosyl-L-methionine = N(6)-dimethyladenosine(1518)/N(6)-dimethyladenosine(1519) in 16S rRNA + 4 S-adenosyl-L-homocysteine + 4 H(+). Its function is as follows. Specifically dimethylates two adjacent adenosines (A1518 and A1519) in the loop of a conserved hairpin near the 3'-end of 16S rRNA in the 30S particle. May play a critical role in biogenesis of 30S subunits. This is Ribosomal RNA small subunit methyltransferase A from Legionella pneumophila (strain Corby).